Consider the following 253-residue polypeptide: Ubiquinone/menaquinone biosynthesis C-methyltransferase UbiE (253 aa).

S-adenosyl-L-methionine-binding positions include T76, D97, and 125-126 (NA).

It belongs to the class I-like SAM-binding methyltransferase superfamily. MenG/UbiE family.

It catalyses the reaction a 2-demethylmenaquinol + S-adenosyl-L-methionine = a menaquinol + S-adenosyl-L-homocysteine + H(+). The enzyme catalyses a 2-methoxy-6-(all-trans-polyprenyl)benzene-1,4-diol + S-adenosyl-L-methionine = a 5-methoxy-2-methyl-3-(all-trans-polyprenyl)benzene-1,4-diol + S-adenosyl-L-homocysteine + H(+). It participates in quinol/quinone metabolism; menaquinone biosynthesis; menaquinol from 1,4-dihydroxy-2-naphthoate: step 2/2. Its pathway is cofactor biosynthesis; ubiquinone biosynthesis. In terms of biological role, methyltransferase required for the conversion of demethylmenaquinol (DMKH2) to menaquinol (MKH2) and the conversion of 2-polyprenyl-6-methoxy-1,4-benzoquinol (DDMQH2) to 2-polyprenyl-3-methyl-6-methoxy-1,4-benzoquinol (DMQH2). This chain is Ubiquinone/menaquinone biosynthesis C-methyltransferase UbiE, found in Bradyrhizobium diazoefficiens (strain JCM 10833 / BCRC 13528 / IAM 13628 / NBRC 14792 / USDA 110).